Reading from the N-terminus, the 406-residue chain is Tyrosine--tRNA ligase (406 aa).

Position 35 (Y35) interacts with L-tyrosine. Positions 40 to 49 match the 'HIGH' region motif; sequence PTADSLHVGH. The L-tyrosine site is built by Y168 and Q172. A 'KMSKS' region motif is present at residues 228 to 232; sequence KMGKT. K231 contributes to the ATP binding site. One can recognise an S4 RNA-binding domain in the interval 340–404; that stretch reads SELLDILVEA…RGKKNYNKIV (65 aa).

Belongs to the class-I aminoacyl-tRNA synthetase family. TyrS type 1 subfamily. As to quaternary structure, homodimer.

It is found in the cytoplasm. The enzyme catalyses tRNA(Tyr) + L-tyrosine + ATP = L-tyrosyl-tRNA(Tyr) + AMP + diphosphate + H(+). Catalyzes the attachment of tyrosine to tRNA(Tyr) in a two-step reaction: tyrosine is first activated by ATP to form Tyr-AMP and then transferred to the acceptor end of tRNA(Tyr). The protein is Tyrosine--tRNA ligase of Clostridium perfringens (strain SM101 / Type A).